The sequence spans 1501 residues: Pleiotropic ABC efflux transporter of multiple drugs CDR1 (1501 aa).

Residues 1–30 are disordered; that stretch reads MSDSKMSSQDESKLEKAISQDSSSENHSIN. Topologically, residues 1–513 are cytoplasmic; sequence MSDSKMSSQD…NFLRMKGDPS (513 aa). The tract at residues 2-512 is NBD1; that stretch reads SDSKMSSQDE…RNFLRMKGDP (511 aa). Residues 8 to 18 show a composition bias toward basic and acidic residues; that stretch reads SQDESKLEKAI. The ABC transporter 1 domain occupies 150–404; sequence LATEGFRHFQ…FEKMGWKCPQ (255 aa). The helical transmembrane segment at 514-534 threads the bilayer; the sequence is IPIFSVFGQLVMGLILSSVFY. Residues 535-548 are Extracellular-facing; the sequence is NLSQTTGSFYYRGA. A helical transmembrane segment spans residues 549-569; that stretch reads AMFFAVLFNAFSSLLEIMSLF. At 570-597 the chain is on the cytoplasmic side; the sequence is EARPIVEKHKKYALYRPSADALASIISE. A helical transmembrane segment spans residues 598–618; it reads LPVKLAMSMSFNFVFYFMVNF. The Extracellular portion of the chain corresponds to 619-622; it reads RRNP. A helical transmembrane segment spans residues 623-643; sequence GRFFFYWLMCIWCTFVMSHLF. Residues 644–654 are Cytoplasmic-facing; it reads RSIGAVSTSIS. The helical transmembrane segment at 655–675 threads the bilayer; sequence GAMTPATVLLLAMVIYTGFVI. At 676–764 the chain is on the extracellular side; it reads PTPSMLGWSR…QYYNSHKWRN (89 aa). Residues 765-785 form a helical membrane-spanning segment; that stretch reads LGITIGFAVFFLAIYIALTEF. The Cytoplasmic segment spans residues 786-1195; the sequence is NKGAMQKGEI…TIVQDWRSPG (410 aa). The segment at 786–1195 is NBD2; the sequence is NKGAMQKGEI…TIVQDWRSPG (410 aa). The 245-residue stretch at 859 to 1103 folds into the ABC transporter 2 domain; that stretch reads FFWRDLTYQV…MINYFEKYGA (245 aa). 895–902 lines the ATP pocket; that stretch reads GASGAGKT. Residues 1137–1164 adopt a coiled-coil conformation; it reads RNSSEYQAVREEINRMEAELSKLPRDND. The helical transmembrane segment at 1196-1216 threads the bilayer; it reads YIYSKIFLVVSAALFNGFSFF. Topologically, residues 1217 to 1229 are extracellular; sequence KAKNNMQGLQNQM. The helical transmembrane segment at 1230-1250 threads the bilayer; sequence FSVFMFFIPFNTLVQQMLPYF. Topologically, residues 1251 to 1280 are cytoplasmic; the sequence is VKQRDVYEVREAPSRTFSWFAFIAGQITSE. The chain crosses the membrane as a helical span at residues 1281-1301; the sequence is IPYQVAVGTIAFFCWYYPLGL. At 1302 to 1314 the chain is on the extracellular side; the sequence is YNNATPTDSVNPR. Residues 1315–1335 traverse the membrane as a helical segment; it reads GVLMWMLVTAFYVYTATMGQL. The Cytoplasmic segment spans residues 1336 to 1355; it reads CMSFSELADNAANLATLLFT. Residues 1356–1376 form a helical membrane-spanning segment; sequence MCLNFCGVLAGPDVLPGFWIF. Residues 1377 to 1466 are Extracellular-facing; the sequence is MYRCNPFTYL…NSLYSERWRN (90 aa). A helical membrane pass occupies residues 1467–1487; it reads FGIFIAFIAINIILTVIFYWL. The Cytoplasmic segment spans residues 1488–1501; it reads ARVPKGNREKKNKK.

Belongs to the ABC transporter superfamily.

It is found in the cell membrane. With respect to regulation, disulfiram reverses CDR1-mediated drug resistance by interaction with both ATP and substrate-binding sites of the transporter and may be useful for antifungal therapy. In terms of biological role, pleiotropic ABC efflux transporter that confers resistance to numerous chemicals including anisomycin, cycloheximide, fluconazole, miconazole, ketoconazole, itriconazole, nystatin, terbinafine, amorolfine, brefeldin A, amphotericin B, fluphenazine, as well as estrogen. Plays a role in farnesol-induced apoptotic process through glutathione efflux activity. Mediates in-to-out translocation of membrane phospholipids including aminophospholipids and thus regulates asymmetric distribution of phosphatidylethanolamine. Exhibits nucleoside triphosphatase activity. This chain is Pleiotropic ABC efflux transporter of multiple drugs CDR1 (CDR1), found in Candida albicans (strain SC5314 / ATCC MYA-2876) (Yeast).